We begin with the raw amino-acid sequence, 142 residues long: Hemoglobin subunit alpha-1/2 (142 aa).

Residues 2-142 (VLSADDKTNI…VSTVLTSKYR (141 aa)) form the Globin domain. Ser4 is subject to Phosphoserine. An N6-succinyllysine modification is found at Lys8. Residue Thr9 is modified to Phosphothreonine. Lys12 is subject to N6-succinyllysine. Position 17 is an N6-acetyllysine; alternate (Lys17). Lys17 is modified (N6-succinyllysine; alternate). Residue Tyr25 is modified to Phosphotyrosine. N6-succinyllysine is present on Lys41. Position 50 is a phosphoserine (Ser50). Residue His59 participates in O2 binding. Residue His88 participates in heme b binding. Phosphoserine is present on Ser103. Thr109 is subject to Phosphothreonine. 2 positions are modified to phosphoserine: Ser125 and Ser132. Phosphothreonine occurs at positions 135 and 138. Position 139 is a phosphoserine (Ser139).

This sequence belongs to the globin family. Heterotetramer of two alpha chains and two beta chains. In terms of tissue distribution, red blood cells.

Its function is as follows. Involved in oxygen transport from the lung to the various peripheral tissues. Functionally, hemopressin acts as an antagonist peptide of the cannabinoid receptor CNR1. Hemopressin-binding efficiently blocks cannabinoid receptor CNR1 and subsequent signaling. This is Hemoglobin subunit alpha-1/2 (Hba1) from Rattus norvegicus (Rat).